The primary structure comprises 78 residues: Protein SlyX homolog (78 aa).

This sequence belongs to the SlyX family.

This Xanthomonas campestris pv. campestris (strain 8004) protein is Protein SlyX homolog.